The primary structure comprises 264 residues: MAEIDPTQLELERQGILLTTVNRFYNWGRRSSIWPMAFGLACCAIEMMAFGLSRYDVARFGAELFRASPRQADLMIVAGTVTKKMAPQVVRLYNQMAEPRYVISMGACATSGGPFRDGYNVLRGIDLLIPVDVYVPGCPPRPEALLHALMTLQEQIDRQKLGRVRWYGSGDKPQTGDFPVPTFGAKGLEIDGKLVDPVGGLPLLSPYTSPSHGEHRSGQIEHPEVVRQFPIMDPEVELENALKARGIAPEIAADDLKRSVVNDA.

[4Fe-4S] cluster is bound by residues cysteine 42, cysteine 43, cysteine 108, and cysteine 138.

The protein belongs to the complex I 20 kDa subunit family. As to quaternary structure, NDH-1 is composed of 14 different subunits. Subunits NuoB, C, D, E, F, and G constitute the peripheral sector of the complex. The cofactor is [4Fe-4S] cluster.

The protein resides in the cell membrane. It catalyses the reaction a quinone + NADH + 5 H(+)(in) = a quinol + NAD(+) + 4 H(+)(out). Functionally, NDH-1 shuttles electrons from NADH, via FMN and iron-sulfur (Fe-S) centers, to quinones in the respiratory chain. The immediate electron acceptor for the enzyme in this species is believed to be ubiquinone. Couples the redox reaction to proton translocation (for every two electrons transferred, four hydrogen ions are translocated across the cytoplasmic membrane), and thus conserves the redox energy in a proton gradient. This chain is NADH-quinone oxidoreductase subunit B 1, found in Chloroflexus aurantiacus (strain ATCC 29366 / DSM 635 / J-10-fl).